A 260-amino-acid chain; its full sequence is MEVVILPGSKQIGALAADAIEALLRRKPDAVLGLATGSSPLPVYDELARRHGQAGLDFSRVQAFALDEYVGLEPGHPQSYREVIRREFTDRVNIAPGNVHHPDGSAADIPAACQAYEDAIKAAGGVDLQLLGIGTDGHIGFNEPGSSLASRTRIKSLIEQTRRDNARFFTNIHDVPHHVLTQGLGTIMDARHVILIATGAQKAQAVRDFVEGPVAAICAASVLQMHPHVTVLVDEAAASSLRLADYYRHTYDSKPAWQGL.

Asp67 serves as the catalytic Proton acceptor; for enolization step. Catalysis depends on Asp136, which acts as the For ring-opening step. The active-site Proton acceptor; for ring-opening step is His138. Residue Glu143 is the For ring-opening step of the active site.

Belongs to the glucosamine/galactosamine-6-phosphate isomerase family. NagB subfamily.

It carries out the reaction alpha-D-glucosamine 6-phosphate + H2O = beta-D-fructose 6-phosphate + NH4(+). It participates in amino-sugar metabolism; N-acetylneuraminate degradation; D-fructose 6-phosphate from N-acetylneuraminate: step 5/5. In terms of biological role, catalyzes the reversible isomerization-deamination of glucosamine 6-phosphate (GlcN6P) to form fructose 6-phosphate (Fru6P) and ammonium ion. This Arthrobacter sp. (strain FB24) protein is Glucosamine-6-phosphate deaminase.